A 215-amino-acid polypeptide reads, in one-letter code: Adenylate kinase (215 aa).

An ATP-binding site is contributed by 10-15 (GAGKGT). Residues 30-59 (STGDMFRAAMKNETEMGKLAKSFIDKGELV) form an NMP region. AMP-binding positions include threonine 31, arginine 36, 57 to 59 (ELV), 86 to 89 (GYPR), and glutamine 93. Residues 127–165 (GRYICRNCGATYHKIFNPTKVEGTCDVCGSHDLYQRADD) are LID. Arginine 128 contacts ATP. 2 residues coordinate Zn(2+): cysteine 131 and cysteine 134. 137–138 (TY) serves as a coordination point for ATP. The Zn(2+) site is built by cysteine 151 and cysteine 154. Residues arginine 162 and arginine 173 each coordinate AMP. Glutamine 201 provides a ligand contact to ATP.

The protein belongs to the adenylate kinase family. As to quaternary structure, monomer.

The protein resides in the cytoplasm. It carries out the reaction AMP + ATP = 2 ADP. Its pathway is purine metabolism; AMP biosynthesis via salvage pathway; AMP from ADP: step 1/1. Functionally, catalyzes the reversible transfer of the terminal phosphate group between ATP and AMP. Plays an important role in cellular energy homeostasis and in adenine nucleotide metabolism. This chain is Adenylate kinase, found in Lactococcus lactis subsp. cremoris (strain SK11).